A 323-amino-acid polypeptide reads, in one-letter code: Deaminated glutathione amidase (323 aa).

Residues 1-33 (MLGFITRPPHQLLCTGYRLLRTPVLCTQPRPRT) constitute a mitochondrion transit peptide. The region spanning 42–294 (LPLVAVCQVT…PGLCLARIDL (253 aa)) is the CN hydrolase domain. Catalysis depends on glutamate 82, which acts as the Proton acceptor. Lysine 157 acts as the Proton donor in catalysis. Catalysis depends on cysteine 199, which acts as the Nucleophile.

The protein belongs to the carbon-nitrogen hydrolase superfamily. NIT1/NIT2 family. In terms of tissue distribution, expressed in most tissues with higher expression in adult liver and kidney as well as in fetal adrenal gland and skeletal muscle.

The protein resides in the mitochondrion. It localises to the cytoplasm. It catalyses the reaction N-(4-oxoglutaryl)-L-cysteinylglycine + H2O = L-cysteinylglycine + 2-oxoglutarate. The enzyme catalyses N-(4-carboxy-4-oxobutanoyl)-L-ethylglycylglycine + H2O = N-(2-aminobutanoyl)glycine + 2-oxoglutarate. Functionally, catalyzes the hydrolysis of the amide bond in N-(4-oxoglutarate)-L-cysteinylglycine (deaminated glutathione), a metabolite repair reaction to dispose of the harmful deaminated glutathione. Possesses amidase activity toward deaminated ophthalmate in vitro. Plays a role in cell growth and apoptosis: loss of expression promotes cell growth, resistance to DNA damage stress and increased incidence to NMBA-induced tumors. Has tumor suppressor properties that enhances the apoptotic responsiveness in cancer cells; this effect is additive to the tumor suppressor activity of FHIT. It is also a negative regulator of primary T-cells. The sequence is that of Deaminated glutathione amidase from Mus musculus (Mouse).